Here is a 366-residue protein sequence, read N- to C-terminus: Beta sliding clamp (366 aa).

The protein belongs to the beta sliding clamp family. Forms a ring-shaped head-to-tail homodimer around DNA which binds and tethers DNA polymerases and other proteins to the DNA. The DNA replisome complex has a single clamp-loading complex (3 tau and 1 each of delta, delta', psi and chi subunits) which binds 3 Pol III cores (1 core on the leading strand and 2 on the lagging strand) each with a beta sliding clamp dimer. Additional proteins in the replisome are other copies of gamma, psi and chi, Ssb, DNA helicase and RNA primase.

It localises to the cytoplasm. Functionally, confers DNA tethering and processivity to DNA polymerases and other proteins. Acts as a clamp, forming a ring around DNA (a reaction catalyzed by the clamp-loading complex) which diffuses in an ATP-independent manner freely and bidirectionally along dsDNA. Initially characterized for its ability to contact the catalytic subunit of DNA polymerase III (Pol III), a complex, multichain enzyme responsible for most of the replicative synthesis in bacteria; Pol III exhibits 3'-5' exonuclease proofreading activity. The beta chain is required for initiation of replication as well as for processivity of DNA replication. The sequence is that of Beta sliding clamp (dnaN) from Buchnera aphidicola subsp. Acyrthosiphon pisum (strain APS) (Acyrthosiphon pisum symbiotic bacterium).